The primary structure comprises 245 residues: Ribosomal RNA large subunit methyltransferase E (245 aa).

Residues 1-25 (MTKSPIGGNRSGRKLGQKVKKGKLK) form a disordered region. The segment covering 11–25 (SGRKLGQKVKKGKLK) has biased composition (basic residues). Positions 81, 83, 104, 120, and 144 each coordinate S-adenosyl-L-methionine. The active-site Proton acceptor is Lys-184.

Belongs to the class I-like SAM-binding methyltransferase superfamily. RNA methyltransferase RlmE family.

The protein resides in the cytoplasm. The catalysed reaction is uridine(2552) in 23S rRNA + S-adenosyl-L-methionine = 2'-O-methyluridine(2552) in 23S rRNA + S-adenosyl-L-homocysteine + H(+). Its function is as follows. Specifically methylates the uridine in position 2552 of 23S rRNA at the 2'-O position of the ribose in the fully assembled 50S ribosomal subunit. This Rhizobium meliloti (strain 1021) (Ensifer meliloti) protein is Ribosomal RNA large subunit methyltransferase E.